The primary structure comprises 230 residues: Octanoyltransferase (230 aa).

The region spanning proline 31–proline 230 is the BPL/LPL catalytic domain. Substrate-binding positions include arginine 70–histidine 77, alanine 163–glycine 165, and glycine 176–alanine 178. The active-site Acyl-thioester intermediate is cysteine 194.

This sequence belongs to the LipB family.

It localises to the cytoplasm. It carries out the reaction octanoyl-[ACP] + L-lysyl-[protein] = N(6)-octanoyl-L-lysyl-[protein] + holo-[ACP] + H(+). The protein operates within protein modification; protein lipoylation via endogenous pathway; protein N(6)-(lipoyl)lysine from octanoyl-[acyl-carrier-protein]: step 1/2. In terms of biological role, catalyzes the transfer of endogenously produced octanoic acid from octanoyl-acyl-carrier-protein onto the lipoyl domains of lipoate-dependent enzymes. Lipoyl-ACP can also act as a substrate although octanoyl-ACP is likely to be the physiological substrate. This Albidiferax ferrireducens (strain ATCC BAA-621 / DSM 15236 / T118) (Rhodoferax ferrireducens) protein is Octanoyltransferase.